Consider the following 172-residue polypeptide: Dual-action ribosomal maturation protein DarP (172 aa).

The protein belongs to the DarP family.

The protein resides in the cytoplasm. Member of a network of 50S ribosomal subunit biogenesis factors which assembles along the 30S-50S interface, preventing incorrect 23S rRNA structures from forming. Promotes peptidyl transferase center (PTC) maturation. The protein is Dual-action ribosomal maturation protein DarP of Ectopseudomonas mendocina (strain ymp) (Pseudomonas mendocina).